Here is a 144-residue protein sequence, read N- to C-terminus: 6-pyruvoyl tetrahydrobiopterin synthase (144 aa).

Position 18 is a phosphoserine (Ser-18). His-23 contacts Zn(2+). Ser-27 is subject to Phosphoserine. Cys-42 serves as the catalytic Proton acceptor. His-48 and His-50 together coordinate Zn(2+). His-89 (charge relay system) is an active-site residue. Phosphotyrosine is present on Tyr-127. Glu-133 serves as the catalytic Charge relay system.

It belongs to the PTPS family. As to quaternary structure, homodimer. Homohexamer formed of two homotrimers in a head to head fashion. Zn(2+) is required as a cofactor. Phosphorylation of Ser-18 is required for maximal enzyme activity.

The enzyme catalyses 7,8-dihydroneopterin 3'-triphosphate = 6-pyruvoyl-5,6,7,8-tetrahydropterin + triphosphate + H(+). Its pathway is cofactor biosynthesis; tetrahydrobiopterin biosynthesis; tetrahydrobiopterin from 7,8-dihydroneopterin triphosphate: step 1/3. Functionally, involved in the biosynthesis of tetrahydrobiopterin, an essential cofactor of aromatic amino acid hydroxylases. Catalyzes the transformation of 7,8-dihydroneopterin triphosphate into 6-pyruvoyl tetrahydropterin. The sequence is that of 6-pyruvoyl tetrahydrobiopterin synthase from Mus musculus (Mouse).